The chain runs to 109 residues: Nucleoid-associated protein PC1_1077 (109 aa).

The protein belongs to the YbaB/EbfC family. Homodimer.

The protein localises to the cytoplasm. It is found in the nucleoid. In terms of biological role, binds to DNA and alters its conformation. May be involved in regulation of gene expression, nucleoid organization and DNA protection. This chain is Nucleoid-associated protein PC1_1077, found in Pectobacterium carotovorum subsp. carotovorum (strain PC1).